A 169-amino-acid chain; its full sequence is CRISPR system Cmr subunit Cmr5 (169 aa).

It belongs to the CRISPR system Cmr5 family. Monomer in isolation. Part of the type III-B Cmr ribonucleoprotein (RNP) complex, an elongated RNP with Cmr2 and Cmr3 as the base, with Cmr4 and Cmr5 forming a helical core along the mature crRNA (39 or 45 nt in length), while the complex is capped by Cmr6 and Cmr1. The 5' end of the crRNA is bound to Cmr2 and Cmr3, while Cmr6 and a Cmr1 subunit (Cmr1-1 or Cmr1-2) cap the 3' end of the crRNA. The target RNA lies antiparallel to the crRNA, with its 5' end near Cmr1 and Cmr6 and its 3' end near Cmr2 and Cmr3; major target cleavage occurs nears the junction of Cmr1/Cmr6 and Cmr4/Cmr, with minor cleavage occurring at 6 nt intervals which coincide with the proposed spacing of Cmr4 subunits. Interacts with Cmr4. Interacts with Cmr2, Cmr4 and Cmr6.

It localises to the cytoplasm. Its function is as follows. CRISPR (clustered regularly interspaced short palindromic repeat), is an adaptive immune system that provides protection against mobile genetic elements (viruses, transposable elements and conjugative plasmids). CRISPR clusters contain sequences complementary to antecedent mobile elements and target invading nucleic acids. CRISPR clusters are transcribed and processed into CRISPR RNA (crRNA), formerly called psiRNA (prokaryotic silencing) in this organism. Part of the Cmr ribonucleoprotein complex which has divalent cation-dependent endoribonuclease activity specific for ssRNA complementary to the crRNA (target NRA), generating 5' hydroxy- and 3' phosphate or 2'-3' cyclic phosphate termini. Cmr4 is probably the subunit that cleaves target RNA. Cmr complex does not cleave ssDNA complementary to the crRNA. Cleavage of invading RNA is guided by the crRNA; substrate cleavage occurs a fixed distance (14 nt) from the 3' end of the crRNA. In vitro reconstitution shows Cmr1-2 and Cmr5 are not absolutely necessary for target cleavage. This Pyrococcus furiosus (strain ATCC 43587 / DSM 3638 / JCM 8422 / Vc1) protein is CRISPR system Cmr subunit Cmr5.